Here is a 1135-residue protein sequence, read N- to C-terminus: Receptor-type guanylate cyclase gcy-4 (1135 aa).

The signal sequence occupies residues 1–20 (MTQLLRFLLILSIFCDFSHS). Residues 21–483 (QRPTIRVGIA…CPIPFFDQYR (463 aa)) lie on the Extracellular side of the membrane. Residues asparagine 37, asparagine 193, asparagine 209, asparagine 251, asparagine 349, asparagine 375, asparagine 431, asparagine 436, and asparagine 447 are each glycosylated (N-linked (GlcNAc...) asparagine). A helical transmembrane segment spans residues 484–504 (LLIFVFVIVAGLLILAIFTCL). The Cytoplasmic portion of the chain corresponds to 505-1135 (TSMVRNQRAE…VMRREMMRVS (631 aa)). A disordered region spans residues 535-560 (KGRRLSTDSENSTVTKSSKGSSSKNF). Residues 545 to 837 (NSTVTKSSKG…KDNLMDHVFS (293 aa)) enclose the Protein kinase domain. Residues 546–560 (STVTKSSKGSSSKNF) are compositionally biased toward low complexity. The Guanylate cyclase domain maps to 895-1025 (TVFFSDLVKF…DTVNTASRME (131 aa)).

It belongs to the adenylyl cyclase class-4/guanylyl cyclase family. As to expression, expressed bilaterally in ASE neurons.

The protein resides in the cell membrane. The catalysed reaction is GTP = 3',5'-cyclic GMP + diphosphate. Its function is as follows. Guanylate cyclase involved in the production of the second messenger cGMP. Regulates chemotaxis responses toward salt ions in ASE sensory neurons. The polypeptide is Receptor-type guanylate cyclase gcy-4 (Caenorhabditis briggsae).